The sequence spans 444 residues: UDP-N-acetylglucosamine 1-carboxyvinyltransferase (444 aa).

Position 22–23 (22–23 (KN)) interacts with phosphoenolpyruvate. Position 94 (Arg-94) interacts with UDP-N-acetyl-alpha-D-glucosamine. The Proton donor role is filled by Asp-119. Asp-309 and Val-331 together coordinate UDP-N-acetyl-alpha-D-glucosamine.

Belongs to the EPSP synthase family. MurA subfamily.

Its subcellular location is the cytoplasm. It carries out the reaction phosphoenolpyruvate + UDP-N-acetyl-alpha-D-glucosamine = UDP-N-acetyl-3-O-(1-carboxyvinyl)-alpha-D-glucosamine + phosphate. It participates in cell wall biogenesis; peptidoglycan biosynthesis. Cell wall formation. Adds enolpyruvyl to UDP-N-acetylglucosamine. The chain is UDP-N-acetylglucosamine 1-carboxyvinyltransferase from Chlamydia trachomatis serovar A (strain ATCC VR-571B / DSM 19440 / HAR-13).